A 145-amino-acid chain; its full sequence is Protein SprT-like (145 aa).

The SprT-like domain occupies 5–140 (DYVREVSLAD…ACGRCHGRLI (136 aa)). Position 64 (H64) interacts with Zn(2+). Residue E65 is part of the active site. A Zn(2+)-binding site is contributed by H68.

Belongs to the SprT family. It depends on Zn(2+) as a cofactor.

The protein localises to the cytoplasm. In Streptococcus equi subsp. equi (strain 4047), this protein is Protein SprT-like.